A 672-amino-acid polypeptide reads, in one-letter code: Transcriptional regulator Kaiso (672 aa).

Residues 1 to 103 are interaction with NCOR1; the sequence is MESRKLISAT…RSDLLDELIK (103 aa). A self-association region spans residues 1-136; sequence MESRKLISAT…SGTAQDGNTE (136 aa). One can recognise a BTB domain in the interval 32-94; it reads CDVTVIVEDR…IYSSKIVRVR (63 aa). Glycyl lysine isopeptide (Lys-Gly) (interchain with G-Cter in SUMO2) cross-links involve residues Lys151 and Lys153. A Phosphothreonine modification is found at Thr251. Residues 298-573 form an interaction with CBFA2T3 region; the sequence is LPNHMPSSIN…FMSSHIKSVH (276 aa). A disordered region spans residues 325-354; it reads KANEEEEEEIIDDDDDTISSSPDSAVSNTS. The segment covering 328-341 has biased composition (acidic residues); that stretch reads EEEEEEIIDDDDDT. Residues Lys390, Lys407, Lys414, Lys449, Lys465, Lys474, and Lys479 each participate in a glycyl lysine isopeptide (Lys-Gly) (interchain with G-Cter in SUMO2) cross-link. The interval 454–672 is interaction with CTNND1; that stretch reads EGEARLENEI…EFEFIIPESY (219 aa). The Nuclear localization signal motif lies at 471 to 480; that stretch reads MANKRMKVKH. C2H2-type zinc fingers lie at residues 494 to 516, 522 to 544, and 550 to 573; these read YICIVCKRSYVCLTSLRRHFNIH, YPCRYCEKVFPLAEYRTKHEIHH, and YQCLACGKSFINYQFMSSHIKSVH. The required for DNA-binding stretch occupies residues 514–638; that stretch reads NIHSWEKKYP…TTTSTQNKPM (125 aa). Glycyl lysine isopeptide (Lys-Gly) (interchain with G-Cter in SUMO2) cross-links involve residues Lys539, Lys570, Lys582, Lys611, and Lys618. The tract at residues 616–635 is disordered; the sequence is GYKVDTGKEPPVGTTTSTQN.

As to quaternary structure, self-associates. Interacts with CTNND2. Interacts with CTNND1, and this interaction inhibits binding to both methylated and non-methylated DNA. Interacts with NCOR1. Interacts with KPNA2/RCH1, which may mediate nuclear import of this protein. Interacts with CBFA2T3. In terms of tissue distribution, expressed in vascular endothelium.

It is found in the nucleus. It localises to the cytoplasm. Its function is as follows. Transcriptional regulator with bimodal DNA-binding specificity. Binds to methylated CpG dinucleotides in the consensus sequence 5'-CGCG-3' and also binds to the non-methylated consensus sequence 5'-CTGCNA-3' also known as the consensus kaiso binding site (KBS). Recruits the N-CoR repressor complex to promote histone deacetylation and the formation of repressive chromatin structures in target gene promoters. May contribute to the repression of target genes of the Wnt signaling pathway. May also activate transcription of a subset of target genes by the recruitment of CTNND2. Represses expression of MMP7 in conjunction with transcriptional corepressors CBFA2T3, CBFA2T2 and RUNX1T1. This is Transcriptional regulator Kaiso (ZBTB33) from Homo sapiens (Human).